The chain runs to 183 residues: NADH-quinone oxidoreductase subunit B 2 (183 aa).

[4Fe-4S] cluster is bound by residues Cys47, Cys48, Cys113, and Cys142.

Belongs to the complex I 20 kDa subunit family. NDH-1 is composed of 14 different subunits. Subunits NuoB, C, D, E, F, and G constitute the peripheral sector of the complex. [4Fe-4S] cluster is required as a cofactor.

The protein localises to the cell inner membrane. It catalyses the reaction a quinone + NADH + 5 H(+)(in) = a quinol + NAD(+) + 4 H(+)(out). Functionally, NDH-1 shuttles electrons from NADH, via FMN and iron-sulfur (Fe-S) centers, to quinones in the respiratory chain. The immediate electron acceptor for the enzyme in this species is believed to be ubiquinone. Couples the redox reaction to proton translocation (for every two electrons transferred, four hydrogen ions are translocated across the cytoplasmic membrane), and thus conserves the redox energy in a proton gradient. The chain is NADH-quinone oxidoreductase subunit B 2 from Anaeromyxobacter sp. (strain Fw109-5).